The following is a 687-amino-acid chain: Outer dynein arm-docking complex subunit 1 (687 aa).

Coiled coils occupy residues Q100–V193, R222–K267, and I341–R421. A disordered region spans residues S126–K147. 3 disordered regions span residues V363–D388, F487–D511, and E540–Y687. The span at R366–D388 shows a compositional bias: basic and acidic residues. A compositionally biased stretch (low complexity) spans S544–S556. Composition is skewed to polar residues over residues R557–G611 and R620–G629. Low complexity predominate over residues S660–S680.

It belongs to the ODA1/DCC2 family. As to quaternary structure, component of the outer dynein arm-docking complex along with ODAD2, ODAD3, ODAD4 and CLXN. Interacts with ODAD3. Interacts with ODAD4; this interaction may facilitate the recruitment and/or attachment of outer dynein arm docking complex proteins, including ODAD1, ODAD3, and ODAD4 to ciliary axonemes. Interacts with DNAH9. Interacts with MNS1. Interacts with PIERCE1 and PIERCE2; the interactions link the outer dynein arms docking complex (ODA-DC) to the internal microtubule inner proteins (MIP) in cilium axoneme. In terms of tissue distribution, expressed in trachea multiciliated cells.

It is found in the cytoplasm. The protein localises to the cytoskeleton. It localises to the cilium axoneme. Its function is as follows. Component of the outer dynein arm-docking complex (ODA-DC) that mediates outer dynein arms (ODA) binding onto the doublet microtubule. Involved in mediating assembly of both ODAs and their axonemal docking complex onto ciliary microtubules. This Bos taurus (Bovine) protein is Outer dynein arm-docking complex subunit 1 (ODAD1).